The chain runs to 285 residues: MDAIKKKMQAMKLEKDNALDRAAMCEQQAKDANLRAEKAEEEARQLQKKIQTIENELDQTQESLMQVNGKLEEKEKALQNAESEVAALNRRIQLLEEDLERSEERLATATAKLSEASQAADESERARKVLENRSLADEERMDALENQLKEARFLAEEADKKYDEVARKLAMVEADLERAEERAESGESKIVELEEELRVVGNNLKSLEVSEEKANQREEEYKNQIKTLTTRLKEAEARAEFAERSVQKLQKEVDRLEDELVAEKEKYKDIGDDLDTAFVELILKE.

A coiled-coil region spans residues 1 to 277 (MDAIKKKMQA…KDIGDDLDTA (277 aa)). Residues 103–133 (EERLATATAKLSEASQAADESERARKVLENR) are disordered. Over residues 122 to 133 (ESERARKVLENR) the composition is skewed to basic and acidic residues.

The protein belongs to the tropomyosin family. As to quaternary structure, homodimer.

In terms of biological role, tropomyosin, in association with the troponin complex, plays a central role in the calcium dependent regulation of muscle contraction. This is Tropomyosin-2 from Bombyx mori (Silk moth).